The primary structure comprises 314 residues: 4-hydroxy-3-methylbut-2-enyl diphosphate reductase (314 aa).

A [4Fe-4S] cluster-binding site is contributed by Cys-12. His-41 and His-74 together coordinate (2E)-4-hydroxy-3-methylbut-2-enyl diphosphate. 2 residues coordinate dimethylallyl diphosphate: His-41 and His-74. Residues His-41 and His-74 each contribute to the isopentenyl diphosphate site. Cys-96 lines the [4Fe-4S] cluster pocket. His-124 lines the (2E)-4-hydroxy-3-methylbut-2-enyl diphosphate pocket. His-124 serves as a coordination point for dimethylallyl diphosphate. His-124 provides a ligand contact to isopentenyl diphosphate. The active-site Proton donor is Glu-126. Residue Thr-167 coordinates (2E)-4-hydroxy-3-methylbut-2-enyl diphosphate. [4Fe-4S] cluster is bound at residue Cys-197. (2E)-4-hydroxy-3-methylbut-2-enyl diphosphate contacts are provided by Ser-225, Ser-226, Asn-227, and Ser-269. Ser-225, Ser-226, Asn-227, and Ser-269 together coordinate dimethylallyl diphosphate. Isopentenyl diphosphate contacts are provided by Ser-225, Ser-226, Asn-227, and Ser-269.

This sequence belongs to the IspH family. Requires [4Fe-4S] cluster as cofactor.

The enzyme catalyses isopentenyl diphosphate + 2 oxidized [2Fe-2S]-[ferredoxin] + H2O = (2E)-4-hydroxy-3-methylbut-2-enyl diphosphate + 2 reduced [2Fe-2S]-[ferredoxin] + 2 H(+). The catalysed reaction is dimethylallyl diphosphate + 2 oxidized [2Fe-2S]-[ferredoxin] + H2O = (2E)-4-hydroxy-3-methylbut-2-enyl diphosphate + 2 reduced [2Fe-2S]-[ferredoxin] + 2 H(+). Its pathway is isoprenoid biosynthesis; dimethylallyl diphosphate biosynthesis; dimethylallyl diphosphate from (2E)-4-hydroxy-3-methylbutenyl diphosphate: step 1/1. The protein operates within isoprenoid biosynthesis; isopentenyl diphosphate biosynthesis via DXP pathway; isopentenyl diphosphate from 1-deoxy-D-xylulose 5-phosphate: step 6/6. Catalyzes the conversion of 1-hydroxy-2-methyl-2-(E)-butenyl 4-diphosphate (HMBPP) into a mixture of isopentenyl diphosphate (IPP) and dimethylallyl diphosphate (DMAPP). Acts in the terminal step of the DOXP/MEP pathway for isoprenoid precursor biosynthesis. This is 4-hydroxy-3-methylbut-2-enyl diphosphate reductase from Actinobacillus succinogenes (strain ATCC 55618 / DSM 22257 / CCUG 43843 / 130Z).